Here is a 25-residue protein sequence, read N- to C-terminus: Repetitive proline-rich cell wall protein (25 aa).

The segment at 1–25 is disordered; that stretch reads NYDKPPVEKPPVYKPPVEKPPVYKP. Repeat copies occupy residues 5–9, 10–14, 15–19, and 20–24. Residues 5–24 form a 4 X 5 AA tandem repeats of P-P-V-[EY]-K region; that stretch reads PPVEKPPVYKPPVEKPPVYK. 4-hydroxyproline occurs at positions 6, 11, 16, and 21. Pro residues predominate over residues 8–25; the sequence is EKPPVYKPPVEKPPVYKP.

This sequence belongs to the plant proline-rich protein superfamily. ENOD12 family.

The protein localises to the secreted. It is found in the cell wall. The chain is Repetitive proline-rich cell wall protein from Phaseolus vulgaris (Kidney bean).